The chain runs to 367 residues: Aminomethyltransferase (367 aa).

It belongs to the GcvT family. The glycine cleavage system is composed of four proteins: P, T, L and H.

It catalyses the reaction N(6)-[(R)-S(8)-aminomethyldihydrolipoyl]-L-lysyl-[protein] + (6S)-5,6,7,8-tetrahydrofolate = N(6)-[(R)-dihydrolipoyl]-L-lysyl-[protein] + (6R)-5,10-methylene-5,6,7,8-tetrahydrofolate + NH4(+). Its function is as follows. The glycine cleavage system catalyzes the degradation of glycine. The sequence is that of Aminomethyltransferase from Mycobacterium leprae (strain Br4923).